Consider the following 418-residue polypeptide: UDP-N-acetylglucosamine 1-carboxyvinyltransferase 1 (418 aa).

22 to 23 (KN) is a binding site for phosphoenolpyruvate. Arginine 94 is a binding site for UDP-N-acetyl-alpha-D-glucosamine. Cysteine 118 (proton donor) is an active-site residue. Residue cysteine 118 is modified to 2-(S-cysteinyl)pyruvic acid O-phosphothioketal. Residues 123–127 (RPIDL), aspartate 306, and isoleucine 328 contribute to the UDP-N-acetyl-alpha-D-glucosamine site.

It belongs to the EPSP synthase family. MurA subfamily.

It is found in the cytoplasm. The catalysed reaction is phosphoenolpyruvate + UDP-N-acetyl-alpha-D-glucosamine = UDP-N-acetyl-3-O-(1-carboxyvinyl)-alpha-D-glucosamine + phosphate. It functions in the pathway cell wall biogenesis; peptidoglycan biosynthesis. In terms of biological role, cell wall formation. Adds enolpyruvyl to UDP-N-acetylglucosamine. The protein is UDP-N-acetylglucosamine 1-carboxyvinyltransferase 1 of Clostridium acetobutylicum (strain ATCC 824 / DSM 792 / JCM 1419 / IAM 19013 / LMG 5710 / NBRC 13948 / NRRL B-527 / VKM B-1787 / 2291 / W).